The primary structure comprises 70 residues: Putative membrane protein insertion efficiency factor (70 aa).

The protein belongs to the UPF0161 family.

The protein localises to the cell inner membrane. Functionally, could be involved in insertion of integral membrane proteins into the membrane. The protein is Putative membrane protein insertion efficiency factor of Geobacter sp. (strain M21).